A 218-amino-acid polypeptide reads, in one-letter code: Adenylate kinase (218 aa).

Residue 10-15 (GAGKGT) coordinates ATP. Residues 30–59 (STGDMLRAAVKAGTPLGIEAKKVMDAGGLM) are NMP. AMP is bound by residues T31, R36, 57–59 (GLM), 85–88 (GYPR), and Q92. The interval 122–159 (GRWVHLASGRSYNTQSNPPKVAGQDDITGEALIQRDDD) is LID. Residues R123 and 132–133 (SY) each bind ATP. Residues R156 and R167 each coordinate AMP. G203 is a binding site for ATP.

This sequence belongs to the adenylate kinase family. Monomer.

The protein resides in the cytoplasm. It catalyses the reaction AMP + ATP = 2 ADP. It functions in the pathway purine metabolism; AMP biosynthesis via salvage pathway; AMP from ADP: step 1/1. Its function is as follows. Catalyzes the reversible transfer of the terminal phosphate group between ATP and AMP. Plays an important role in cellular energy homeostasis and in adenine nucleotide metabolism. This is Adenylate kinase from Bordetella avium (strain 197N).